Consider the following 413-residue polypeptide: Glutamate-1-semialdehyde 2,1-aminomutase (413 aa).

An N6-(pyridoxal phosphate)lysine modification is found at K260.

This sequence belongs to the class-III pyridoxal-phosphate-dependent aminotransferase family. HemL subfamily. It depends on pyridoxal 5'-phosphate as a cofactor.

It is found in the cytoplasm. The catalysed reaction is (S)-4-amino-5-oxopentanoate = 5-aminolevulinate. The protein operates within porphyrin-containing compound metabolism; protoporphyrin-IX biosynthesis; 5-aminolevulinate from L-glutamyl-tRNA(Glu): step 2/2. In Methanoregula boonei (strain DSM 21154 / JCM 14090 / 6A8), this protein is Glutamate-1-semialdehyde 2,1-aminomutase.